Consider the following 518-residue polypeptide: MSLQTIGIAAVAVVYFLIRYFNRTDIPKIKGLPEVPGVPIFGNLIQLGDQHATVAQKWAKKFGPVFQVRMGNKRVVFANTFDSVRQLWIKDQSALISRPTFHTFHSVVSSSQGFTIGTSPWDESCKRRRKAAATALNRPATQSYMPIIDLESMSSIRELLRDSANGTMDINPTAYFQRFALNTSLTLNYGIRIEGNVNDELLREIVDVERGVSNFRSTSNQWQDYIPLLRIFPKMNREAEEFRVRRDKYLTYLLDVLKDRIAKGTDKPCITGNILKDPEAKLNDAEIKSICLTMVSAGLDTVPGNLIMGIAYLASEDGQRIQKRAHDEIMKVYPDGDAWEKCLLEEKVPYVTALVKETLRFWTVIPICLPRENTKDIVWNGAVIPKGTTFFMNAYAADYDETHFTNPHAFEPERYLTASSDGSGTPHYGYGAGSRMCAGSHLANRELFTAYVRLITAFTMHPAKRAEDRPILDAIECNAIPTALTTEPKPFKVGFKPRDPVLVRKWIAESEERTKHLN.

Cys-437 contacts heme.

This sequence belongs to the cytochrome P450 family.

The catalysed reaction is 2-phenylacetate + reduced [NADPH--hemoprotein reductase] + O2 = (2-hydroxyphenyl)acetate + oxidized [NADPH--hemoprotein reductase] + H2O + H(+). The protein operates within aromatic compound metabolism; phenylacetate degradation. Catalyzes the hydroxylation of phenylacetate to 2-hydroxyphenylacetate in the homogentisate pathway. The homogentisate pathway is used to catabolize phenylacetate and use it as a carbon source. Can also catalyze the hydroxylation of 3-hydroxyphenylacetate to 2,5-dihydroxyphenylacetate (homogentisate) at low efficiency. This is Phenylacetate 2-hydroxylase (phacA) from Emericella nidulans (Aspergillus nidulans).